Consider the following 263-residue polypeptide: Hemin import ATP-binding protein HmuV (263 aa).

An ABC transporter domain is found at 2 to 242 (IEARDVSVDI…DLIEKVFDCR (241 aa)). 34-41 (GPNGSGKT) provides a ligand contact to ATP.

Belongs to the ABC transporter superfamily. Heme (hemin) importer (TC 3.A.1.14.5) family. The complex is composed of two ATP-binding proteins (HmuV), two transmembrane proteins (HmuU) and a solute-binding protein (HmuT).

Its subcellular location is the cell inner membrane. Its function is as follows. Part of the ABC transporter complex HmuTUV involved in hemin import. Responsible for energy coupling to the transport system. This Mesorhizobium japonicum (strain LMG 29417 / CECT 9101 / MAFF 303099) (Mesorhizobium loti (strain MAFF 303099)) protein is Hemin import ATP-binding protein HmuV.